The following is a 488-amino-acid chain: UDP-N-acetylmuramate--L-alanine ligase (488 aa).

An ATP-binding site is contributed by 129-135 (GSHGKTT).

It belongs to the MurCDEF family.

The protein localises to the cytoplasm. The catalysed reaction is UDP-N-acetyl-alpha-D-muramate + L-alanine + ATP = UDP-N-acetyl-alpha-D-muramoyl-L-alanine + ADP + phosphate + H(+). It functions in the pathway cell wall biogenesis; peptidoglycan biosynthesis. In terms of biological role, cell wall formation. This is UDP-N-acetylmuramate--L-alanine ligase from Prochlorococcus marinus (strain MIT 9303).